A 248-amino-acid chain; its full sequence is Large ribosomal subunit protein uL30A (248 aa).

The segment at Met-1–Lys-44 is disordered. The span at Ile-8–Ala-41 shows a compositional bias: basic and acidic residues.

This sequence belongs to the universal ribosomal protein uL30 family.

In terms of biological role, binds to G-rich structures in 28S rRNA and in mRNAs. Plays a regulatory role in the translation apparatus; inhibits cell-free translation of mRNAs. This is Large ribosomal subunit protein uL30A (Rpl7-1) from Paramecium tetraurelia.